The primary structure comprises 150 residues: MDRTFVMIKPDGVQRGQVGGIVSRFEAKGLKLVAARFEVLPESRVIEQYQEHLSKPFFPSLKSYIRGGPCFLMVWEGRNVVAIVRKMIGATNPQEAAPGTIRGDFGIDIGRNVIHASDSPESAAREIGIHFKPAELFAYTRVDESVVYEY.

ATP-binding residues include lysine 9, phenylalanine 57, arginine 85, threonine 91, arginine 102, and asparagine 112. Histidine 115 serves as the catalytic Pros-phosphohistidine intermediate.

Belongs to the NDK family. Requires Mg(2+) as cofactor.

It localises to the cytoplasm. It carries out the reaction a 2'-deoxyribonucleoside 5'-diphosphate + ATP = a 2'-deoxyribonucleoside 5'-triphosphate + ADP. The enzyme catalyses a ribonucleoside 5'-diphosphate + ATP = a ribonucleoside 5'-triphosphate + ADP. Functionally, major role in the synthesis of nucleoside triphosphates other than ATP. The ATP gamma phosphate is transferred to the NDP beta phosphate via a ping-pong mechanism, using a phosphorylated active-site intermediate. The sequence is that of Nucleoside diphosphate kinase from Methanoregula boonei (strain DSM 21154 / JCM 14090 / 6A8).